The chain runs to 313 residues: MRVVFMGTPDFAVPSLKALVEAGHDVLAVVTQPDRPRGRGRKETPPPVKQAAHALNIPVFQPLKIKDADFTALLKKLSPQVIAVVAYGRIIPPDILTIPKYGCINVHASLLPKYRGAAPIHWAVINGEKETGITTMFMDEGLDTGDMILQEAVAITEEDTAGTVHDALAVLGARLLVQTLELVGQGMAPRVPQQGIPSYAPPLKTEDELIRWDRTARDIFNQIRGMNPWPGARTYFSGKVLKIWRAAVVEEEGAALKPGQVMSAGRNAIVVGTGRGRIAVTELQLQGARRLSAGDFLRGTPMPEGIVLGEACS.

Position 109-112 (109-112 (SLLP)) interacts with (6S)-5,6,7,8-tetrahydrofolate.

Belongs to the Fmt family.

It catalyses the reaction L-methionyl-tRNA(fMet) + (6R)-10-formyltetrahydrofolate = N-formyl-L-methionyl-tRNA(fMet) + (6S)-5,6,7,8-tetrahydrofolate + H(+). Its function is as follows. Attaches a formyl group to the free amino group of methionyl-tRNA(fMet). The formyl group appears to play a dual role in the initiator identity of N-formylmethionyl-tRNA by promoting its recognition by IF2 and preventing the misappropriation of this tRNA by the elongation apparatus. This Pelotomaculum thermopropionicum (strain DSM 13744 / JCM 10971 / SI) protein is Methionyl-tRNA formyltransferase.